Consider the following 998-residue polypeptide: Poly [ADP-ribose] polymerase 1 (998 aa).

2 consecutive PARP-type zinc fingers follow at residues Ala-1–Gly-78 and Phe-99–Lys-189. Cys-8, Cys-11, His-40, Cys-43, Cys-111, Cys-114, His-145, and Cys-148 together coordinate Zn(2+). The segment at Leu-185–Lys-211 is disordered. A compositionally biased stretch (basic and acidic residues) spans Asn-190–Gly-201. 2 short sequence motifs (nuclear localization signal) span residues Lys-193 to Lys-195 and Lys-207 to Lys-212. Positions Lys-211–Pro-345 constitute a PADR1 zinc-binding domain. Positions Gly-276 to Asp-318 are zinc ribbon. Residues Cys-281, Cys-284, Cys-297, and Cys-307 each contribute to the Zn(2+) site. Over residues Ala-348 to Lys-361 the composition is skewed to pro residues. The segment at Ala-348 to Glu-370 is disordered. Residues Ala-357–Lys-507 form an automodification domain region. Residues Pro-369 to Gly-460 enclose the BRCT domain. A polyADP-ribosyl glutamic acid mark is found at Glu-391, Glu-397, Glu-419, Glu-428, Glu-429, Glu-445, Glu-447, Glu-454, Glu-467, Glu-471, Glu-477, Glu-495, Glu-496, and Glu-503. The interval Glu-471–Val-510 is disordered. Residues Lys-492 to Met-506 are compositionally biased toward basic and acidic residues. One can recognise a WGR domain in the interval Ser-525–Phe-621. Residues Lys-645 to Arg-762 form the PARP alpha-helical domain. A PARP catalytic domain is found at Asp-771–Met-997. Residues His-845–Ser-847, Gly-854, Arg-861, and Ser-887 each bind NAD(+). Glu-971 serves as the catalytic For poly [ADP-ribose] polymerase activity.

This sequence belongs to the ARTD/PARP family. In terms of assembly, homodimer; PARP-type zinc-fingers from separate parp1 molecules form a dimer module that specifically recognizes DNA strand breaks. Poly-ADP-ribosylated on serine, glutamate and aspartate residues by autocatalysis. Auto-ADP-ribosylation on serine takes place following interaction with HPF1. Auto poly-ADP-ribosylation on serine residues promotes its dissociation from chromatin.

It is found in the chromosome. It localises to the nucleus. Its subcellular location is the nucleolus. The protein localises to the cytoplasm. The protein resides in the cytosol. The catalysed reaction is NAD(+) + (ADP-D-ribosyl)n-acceptor = nicotinamide + (ADP-D-ribosyl)n+1-acceptor + H(+).. It carries out the reaction L-seryl-[protein] + NAD(+) = O-(ADP-D-ribosyl)-L-seryl-[protein] + nicotinamide + H(+). The enzyme catalyses L-aspartyl-[protein] + NAD(+) = 4-O-(ADP-D-ribosyl)-L-aspartyl-[protein] + nicotinamide. It catalyses the reaction L-glutamyl-[protein] + NAD(+) = 5-O-(ADP-D-ribosyl)-L-glutamyl-[protein] + nicotinamide. The catalysed reaction is L-tyrosyl-[protein] + NAD(+) = O-(ADP-D-ribosyl)-L-tyrosyl-[protein] + nicotinamide + H(+). It carries out the reaction L-histidyl-[protein] + NAD(+) = N(tele)-(ADP-D-ribosyl)-L-histidyl-[protein] + nicotinamide + H(+). Its activity is regulated as follows. ADP-ribosyltransferase activity is regulated via an allosteric activation mechanism. In absence of activation signal, parp1 is autoinhibited by the PARP alpha-helical domain (also named HD region), which prevents effective NAD(+)-binding. Activity is highly stimulated by signals, such as DNA strand breaks. Binding to damaged DNA unfolds the PARP alpha-helical domain, relieving autoinhibition. Poly-ADP-ribosyltransferase activity is tightly regulated and parp1 is removed from damaged chromatin following initial poly-ADP-ribosylation of chromatin to avoid prolonged residence (trapping) that has cytotoxic consequences. A number of factors or post-translational modifications (auto-poly-ADP-ribosylation) promote parp1 removal from chromatin. Its function is as follows. Poly-ADP-ribosyltransferase that mediates poly-ADP-ribosylation of proteins and plays a key role in DNA repair. Mediates glutamate, aspartate, serine, histidine or tyrosine ADP-ribosylation of proteins: the ADP-D-ribosyl group of NAD(+) is transferred to the acceptor carboxyl group of target residues and further ADP-ribosyl groups are transferred to the 2'-position of the terminal adenosine moiety, building up a polymer with an average chain length of 20-30 units. Serine ADP-ribosylation of proteins constitutes the primary form of ADP-ribosylation of proteins in response to DNA damage. Specificity for the different amino acids is conferred by interacting factors, such as hpf1 and nmnat1. Following interaction with hpf1, catalyzes serine ADP-ribosylation of target proteins; hpf1 confers serine specificity by completing the parp1 active site. Also catalyzes tyrosine ADP-ribosylation of target proteins following interaction with hpf1. Following interaction with nmnat1, catalyzes glutamate and aspartate ADP-ribosylation of target proteins; nmnat1 confers glutamate and aspartate specificity. Parp1 initiates the repair of DNA breaks: recognizes and binds DNA breaks within chromatin and recruits hpf1, licensing serine ADP-ribosylation of target proteins, such as histones (H2BS6ADPr and H3S10ADPr), thereby promoting decompaction of chromatin and the recruitment of repair factors leading to the reparation of DNA strand breaks. In addition to base excision repair (BER) pathway, also involved in double-strand breaks (DSBs) repair. Mediates the poly-ADP-ribosylation of a number of proteins. In addition to proteins, also able to ADP-ribosylate DNA: catalyzes ADP-ribosylation of DNA strand break termini containing terminal phosphates and a 2'-OH group in single- and double-stranded DNA, respectively. Parp1-mediated DNA repair in neurons plays a role in sleep: senses DNA damage in neurons and promotes sleep, facilitating efficient DNA repair. In addition to DNA repair, also involved in other processes, such as transcription regulation, programmed cell death, membrane repair, adipogenesis and innate immunity. Acts as a repressor of transcription: binds to nucleosomes and modulates chromatin structure in a manner similar to histone H1, thereby altering RNA polymerase II. Acts both as a positive and negative regulator of transcription elongation, depending on the context. Poly-ADP-ribose chains generated by parp1 also play a role in poly-ADP-ribose-dependent cell death, a process named parthanatos. Also acts as a negative regulator of the cGAS-STING pathway by mediating poly-ADP-ribosylation and inactivation of cgas. Acts as a negative regulator of adipogenesis by catalyzing poly ADP-ribosylation of histone H2B on 'Glu-35' (H2BE35ADPr). The polypeptide is Poly [ADP-ribose] polymerase 1 (parp1) (Xenopus laevis (African clawed frog)).